Consider the following 788-residue polypeptide: Cell division cycle protein 27 homolog (788 aa).

The tract at residues 198 to 436 is disordered; that stretch reads YLDSPASSLK…PLPSVASSLN (239 aa). Residues 217–229 are compositionally biased toward low complexity; sequence GPSSSSAASTAEP. 3 stretches are compositionally biased toward polar residues: residues 241-273, 293-303, and 319-360; these read RGTI…SRIN, SSVTGSRSSLF, and NRAN…NPVR. Residues 366-378 are compositionally biased toward low complexity; that stretch reads ADAAAAANKTAKT. Over residues 391–414 the composition is skewed to polar residues; it reads VSRNSNLARSLSGSTNSVASTASE. 5 TPR repeats span residues 561–594, 596–628, 629–662, 664–696, and 731–764; these read PQSW…DKRF, YAYT…SPRD, YRAW…NPTN, AMLC…NPLD, and AFIF…DPRG.

The protein belongs to the APC3/CDC27 family. As to quaternary structure, the APC/C complex is probably composed of at least 12 subunits: apc-2, apc-10, apc-11, cdc-26, emb-1, emb-27, emb-30, mat-1, mat-2, mat-3, such-1 and gfi-3. In terms of tissue distribution, expressed in the ventral nerve cord.

It is found in the nucleus. It participates in protein modification; protein ubiquitination. Its function is as follows. Probable component of the anaphase promoting complex/cyclosome (APC/C), a cell cycle-regulated E3 ubiquitin ligase that controls progression through mitosis and the G1 phase of the cell cycle. The APC/C complex acts by mediating ubiquitination and subsequent degradation of target proteins. Developmental role in early embryogenesis and the metaphase to anaphase transition in oocyte and spermatocyte meiosis and mitosis in germ cells. Required for embryonic anterior-posterior axis formation. Plays a role in regulating the abundance of glr-1 receptors in postmitotic neurons, which may in turn control animal locomotion. This chain is Cell division cycle protein 27 homolog, found in Caenorhabditis elegans.